The primary structure comprises 204 residues: Holliday junction branch migration complex subunit RuvA (204 aa).

The segment at 1-67 (MIGYLEGKIL…QPKPVLIGFN (67 aa)) is domain I. The segment at 68-145 (SLEEREFFER…VFAGEHGGEP (78 aa)) is domain II. Residues 146–156 (AGPAPVEENFH) are flexible linker. Residues 156–204 (HLLVLDVLVNQLGHKAAEAKELINQAIKRNPAISSPEELFDEVYRGETG) are domain III.

This sequence belongs to the RuvA family. Homotetramer. Forms an RuvA(8)-RuvB(12)-Holliday junction (HJ) complex. HJ DNA is sandwiched between 2 RuvA tetramers; dsDNA enters through RuvA and exits via RuvB. An RuvB hexamer assembles on each DNA strand where it exits the tetramer. Each RuvB hexamer is contacted by two RuvA subunits (via domain III) on 2 adjacent RuvB subunits; this complex drives branch migration. In the full resolvosome a probable DNA-RuvA(4)-RuvB(12)-RuvC(2) complex forms which resolves the HJ.

It localises to the cytoplasm. Functionally, the RuvA-RuvB-RuvC complex processes Holliday junction (HJ) DNA during genetic recombination and DNA repair, while the RuvA-RuvB complex plays an important role in the rescue of blocked DNA replication forks via replication fork reversal (RFR). RuvA specifically binds to HJ cruciform DNA, conferring on it an open structure. The RuvB hexamer acts as an ATP-dependent pump, pulling dsDNA into and through the RuvAB complex. HJ branch migration allows RuvC to scan DNA until it finds its consensus sequence, where it cleaves and resolves the cruciform DNA. The protein is Holliday junction branch migration complex subunit RuvA of Desulfatibacillum aliphaticivorans.